The chain runs to 150 residues: 3-hydroxyacyl-[acyl-carrier-protein] dehydratase FabZ (150 aa).

Histidine 51 is an active-site residue.

The protein belongs to the thioester dehydratase family. FabZ subfamily.

The protein localises to the cytoplasm. The enzyme catalyses a (3R)-hydroxyacyl-[ACP] = a (2E)-enoyl-[ACP] + H2O. In terms of biological role, involved in unsaturated fatty acids biosynthesis. Catalyzes the dehydration of short chain beta-hydroxyacyl-ACPs and long chain saturated and unsaturated beta-hydroxyacyl-ACPs. This is 3-hydroxyacyl-[acyl-carrier-protein] dehydratase FabZ from Geobacter metallireducens (strain ATCC 53774 / DSM 7210 / GS-15).